Here is a 274-residue protein sequence, read N- to C-terminus: Putative bidirectional sugar transporter SWEET7d (274 aa).

The Extracellular portion of the chain corresponds to 1-8 (MVPDLIRN). The chain crosses the membrane as a helical span at residues 9 to 29 (VVGIVGNVISFGLFLSPVPTF). The 88-residue stretch at 9-96 (VVGIVGNVIS…TIFFLFSDKK (88 aa)) folds into the MtN3/slv 1 domain. Residues 30–45 (WRIIKNKDVRDFKADQ) lie on the Cytoplasmic side of the membrane. The chain crosses the membrane as a helical span at residues 46-66 (YLATLLNCMLWVFYGLPIVHP). Residues 67-68 (NS) are Extracellular-facing. The helical transmembrane segment at 69 to 89 (ILVVTINGIGLVIEAVYLTIF) threads the bilayer. The Cytoplasmic portion of the chain corresponds to 90–100 (FLFSDKKNKKK). A helical transmembrane segment spans residues 101–121 (MGVVLATEALFMAAVALGVLL). Over 122 to 130 (DAHTHQRRS) the chain is Extracellular. The chain crosses the membrane as a helical span at residues 131 to 151 (LIVGILCVIFGTIMYSSPLTI). One can recognise a MtN3/slv 2 domain in the interval 132–214 (IVGILCVIFG…QLILYAIYYR (83 aa)). The Cytoplasmic portion of the chain corresponds to 152–164 (MSQVVKTKSVEYM). A helical transmembrane segment spans residues 165 to 185 (PLLLSVVSFLNGLCWTSYALI). At 186–188 (RFD) the chain is on the extracellular side. The helical transmembrane segment at 189–209 (IFITIPNGLGVLFALMQLILY) threads the bilayer. Residues 210-274 (AIYYRTTPKK…SISRLSHKLA (65 aa)) are Cytoplasmic-facing. The tract at residues 218-274 (KKPSTTGPHPRSRIRTSSYQPSPPSPRAPASSPLSARTTTSMAAMSPSISRLSHKLA) is disordered. The span at 245-258 (APASSPLSARTTTS) shows a compositional bias: low complexity.

It belongs to the SWEET sugar transporter family. As to quaternary structure, forms homooligomers and/or heterooligomers.

The protein resides in the cell membrane. Mediates both low-affinity uptake and efflux of sugar across the plasma membrane. The polypeptide is Putative bidirectional sugar transporter SWEET7d (SWEET7D) (Oryza sativa subsp. japonica (Rice)).